Consider the following 266-residue polypeptide: uncharacterized protein (266 aa).

This sequence belongs to the chlamydial CPn_0087/CT_309/TC_0583 family.

This is an uncharacterized protein from Chlamydia trachomatis serovar D (strain ATCC VR-885 / DSM 19411 / UW-3/Cx).